We begin with the raw amino-acid sequence, 207 residues long: ATP synthase subunit b (207 aa).

Residues 1–27 (MKLRATFVFKTTLVALSFALFALFLVS) form the signal peptide. A lipid anchor (N-palmitoyl cysteine) is attached at C28. A lipid anchor (S-diacylglycerol cysteine) is attached at C28. Residues 49–69 (WVFLAHLLAFVILLFLLLFLF) traverse the membrane as a helical segment.

The protein belongs to the ATPase B chain family. As to quaternary structure, F-type ATPases have 2 components, F(1) - the catalytic core - and F(0) - the membrane proton channel. F(1) has five subunits: alpha(3), beta(3), gamma(1), delta(1), epsilon(1). F(0) has three main subunits: a(1), b(2) and c(10-14). The alpha and beta chains form an alternating ring which encloses part of the gamma chain. F(1) is attached to F(0) by a central stalk formed by the gamma and epsilon chains, while a peripheral stalk is formed by the delta and b chains.

Its subcellular location is the cell membrane. In terms of biological role, f(1)F(0) ATP synthase produces ATP from ADP in the presence of a proton or sodium gradient. F-type ATPases consist of two structural domains, F(1) containing the extramembraneous catalytic core and F(0) containing the membrane proton channel, linked together by a central stalk and a peripheral stalk. During catalysis, ATP synthesis in the catalytic domain of F(1) is coupled via a rotary mechanism of the central stalk subunits to proton translocation. Component of the F(0) channel, it forms part of the peripheral stalk, linking F(1) to F(0). The protein is ATP synthase subunit b of Mycoplasma pneumoniae (strain ATCC 29342 / M129 / Subtype 1) (Mycoplasmoides pneumoniae).